Here is a 66-residue protein sequence, read N- to C-terminus: Beta-toxin Cll1m (66 aa).

An LCN-type CS-alpha/beta domain is found at 1 to 66 (KEGYIVNLST…VWPLPKKTCT (66 aa)). 4 disulfide bridges follow: cysteine 12–cysteine 65, cysteine 16–cysteine 41, cysteine 25–cysteine 46, and cysteine 29–cysteine 48. Residue threonine 66 is modified to Threonine amide.

Belongs to the long (4 C-C) scorpion toxin superfamily. Sodium channel inhibitor family. Beta subfamily. In terms of tissue distribution, expressed by the venom gland.

It is found in the secreted. Its function is as follows. Beta toxins bind voltage-independently at site-4 of sodium channels (Nav) and shift the voltage of activation toward more negative potentials thereby affecting sodium channel activation and promoting spontaneous and repetitive firing. This chain is Beta-toxin Cll1m, found in Centruroides limpidus (Mexican scorpion).